A 906-amino-acid polypeptide reads, in one-letter code: Protein translocase subunit SecA (906 aa).

Residues glutamine 86, 104–108 (GEGKT), and aspartate 511 each bind ATP. A compositionally biased stretch (basic and acidic residues) spans 852–888 (EHESVIDNNQRHDEDEQEEAPKVKQVRREGPKVKRND). Residues 852-906 (EHESVIDNNQRHDEDEQEEAPKVKQVRREGPKVKRNDPCPCGSGKKYKQCHSKVE) form a disordered region. 4 residues coordinate Zn(2+): cysteine 890, cysteine 892, cysteine 901, and histidine 902. A compositionally biased stretch (basic residues) spans 896 to 906 (KKYKQCHSKVE).

This sequence belongs to the SecA family. As to quaternary structure, monomer and homodimer. Part of the essential Sec protein translocation apparatus which comprises SecA, SecYEG and auxiliary proteins SecDF-YajC and YidC. The cofactor is Zn(2+).

The protein resides in the cell inner membrane. The protein localises to the cytoplasm. The enzyme catalyses ATP + H2O + cellular proteinSide 1 = ADP + phosphate + cellular proteinSide 2.. In terms of biological role, part of the Sec protein translocase complex. Interacts with the SecYEG preprotein conducting channel. Has a central role in coupling the hydrolysis of ATP to the transfer of proteins into and across the cell membrane, serving both as a receptor for the preprotein-SecB complex and as an ATP-driven molecular motor driving the stepwise translocation of polypeptide chains across the membrane. In Francisella tularensis subsp. tularensis (strain SCHU S4 / Schu 4), this protein is Protein translocase subunit SecA.